Here is a 151-residue protein sequence, read N- to C-terminus: Phospholipase A2 inhibitor BjussuMIP (151 aa).

The first 4 residues, 1-4, serve as a signal peptide directing secretion; the sequence is LANG. A C-type lectin domain is found at 31–146; that stretch reads LKYAFLTVHK…CDENLLVVCE (116 aa). Intrachain disulfides connect cysteine 68-cysteine 145 and cysteine 123-cysteine 137. N-linked (GlcNAc...) asparagine glycosylation occurs at asparagine 107.

It belongs to the alpha-type phospholipase A2 inhibitor family. Oligomer. As to expression, expressed by the liver.

It is found in the secreted. Its function is as follows. Inhibits enzymatic, anticoagulant, edema formation, myotoxicity activities induced by snakes phospholipase A2. Is oligomeric, but it is probable that each of its subunits can bind and inactive a PLA2 molecule. In Bothrops jararacussu (Jararacussu), this protein is Phospholipase A2 inhibitor BjussuMIP.